A 475-amino-acid polypeptide reads, in one-letter code: Histidine--tRNA ligase (475 aa).

The protein belongs to the class-II aminoacyl-tRNA synthetase family. As to quaternary structure, homodimer.

The protein localises to the cytoplasm. The catalysed reaction is tRNA(His) + L-histidine + ATP = L-histidyl-tRNA(His) + AMP + diphosphate + H(+). The sequence is that of Histidine--tRNA ligase from Flavobacterium johnsoniae (strain ATCC 17061 / DSM 2064 / JCM 8514 / BCRC 14874 / CCUG 350202 / NBRC 14942 / NCIMB 11054 / UW101) (Cytophaga johnsonae).